The primary structure comprises 329 residues: 4-hydroxythreonine-4-phosphate dehydrogenase (329 aa).

2 residues coordinate substrate: His137 and Thr138. Residues His167, His212, and His267 each coordinate a divalent metal cation. Substrate contacts are provided by Lys275, Asn284, and Arg293.

The protein belongs to the PdxA family. In terms of assembly, homodimer. Requires Zn(2+) as cofactor. Mg(2+) serves as cofactor. The cofactor is Co(2+).

The protein localises to the cytoplasm. The enzyme catalyses 4-(phosphooxy)-L-threonine + NAD(+) = 3-amino-2-oxopropyl phosphate + CO2 + NADH. It participates in cofactor biosynthesis; pyridoxine 5'-phosphate biosynthesis; pyridoxine 5'-phosphate from D-erythrose 4-phosphate: step 4/5. Catalyzes the NAD(P)-dependent oxidation of 4-(phosphooxy)-L-threonine (HTP) into 2-amino-3-oxo-4-(phosphooxy)butyric acid which spontaneously decarboxylates to form 3-amino-2-oxopropyl phosphate (AHAP). This Stutzerimonas stutzeri (strain A1501) (Pseudomonas stutzeri) protein is 4-hydroxythreonine-4-phosphate dehydrogenase.